The sequence spans 102 residues: Large ribosomal subunit protein bL21 (102 aa).

The protein belongs to the bacterial ribosomal protein bL21 family. Part of the 50S ribosomal subunit. Contacts protein L20.

This protein binds to 23S rRNA in the presence of protein L20. In Azorhizobium caulinodans (strain ATCC 43989 / DSM 5975 / JCM 20966 / LMG 6465 / NBRC 14845 / NCIMB 13405 / ORS 571), this protein is Large ribosomal subunit protein bL21.